Reading from the N-terminus, the 150-residue chain is Arginine repressor (150 aa).

It belongs to the ArgR family.

The protein localises to the cytoplasm. The protein operates within amino-acid biosynthesis; L-arginine biosynthesis [regulation]. Its function is as follows. Regulates arginine biosynthesis genes. This chain is Arginine repressor, found in Clostridium botulinum (strain Okra / Type B1).